We begin with the raw amino-acid sequence, 289 residues long: ATP synthase subunit a (289 aa).

The next 6 membrane-spanning stretches (helical) occupy residues 43-63, 103-123, 160-180, 193-213, 232-252, and 259-279; these read AFHL…LFIF, VIAP…AVDL, FCVF…GGFI, IFVQ…TLIA, VFIL…GLGV, and AVFH…LTIV.

Belongs to the ATPase A chain family. As to quaternary structure, F-type ATPases have 2 components, CF(1) - the catalytic core - and CF(0) - the membrane proton channel. CF(1) has five subunits: alpha(3), beta(3), gamma(1), delta(1), epsilon(1). CF(0) has three main subunits: a(1), b(2) and c(9-12). The alpha and beta chains form an alternating ring which encloses part of the gamma chain. CF(1) is attached to CF(0) by a central stalk formed by the gamma and epsilon chains, while a peripheral stalk is formed by the delta and b chains.

It localises to the cell inner membrane. In terms of biological role, key component of the proton channel; it plays a direct role in the translocation of protons across the membrane. The polypeptide is ATP synthase subunit a (Pseudomonas putida (strain GB-1)).